Here is a 616-residue protein sequence, read N- to C-terminus: uncharacterized protein (616 aa).

The protein belongs to the UbiD family.

This is an uncharacterized protein from Helicobacter pylori (strain ATCC 700392 / 26695) (Campylobacter pylori).